A 483-amino-acid polypeptide reads, in one-letter code: Putative (R)-citramalate synthase CimA (483 aa).

The 245-residue stretch at 1–245 folds into the Pyruvate carboxyltransferase domain; sequence MRDGEQTPGV…DTGIKHEQIY (245 aa).

The protein belongs to the alpha-IPM synthase/homocitrate synthase family. As to quaternary structure, homodimer.

The catalysed reaction is pyruvate + acetyl-CoA + H2O = (3R)-citramalate + CoA + H(+). Its pathway is amino-acid biosynthesis; L-isoleucine biosynthesis; 2-oxobutanoate from pyruvate: step 1/3. Catalyzes the condensation of pyruvate and acetyl-coenzyme A to form (R)-citramalate. The protein is Putative (R)-citramalate synthase CimA of Methanosarcina mazei (strain ATCC BAA-159 / DSM 3647 / Goe1 / Go1 / JCM 11833 / OCM 88) (Methanosarcina frisia).